The chain runs to 451 residues: MSDFFHSDVLSVSELNAFAKSLLENHLAGLWIAGEVSNLTRAASGHYYFSLKDSRAQVRCAMFKGAAVRLAKPLKEGDHIEVSGKISIYEARGEFQITVNEVRLKGLGQLYEAYERLKAQLQAEGAFAAERKKPLPVRPQCIGIVTSLAAAALRDVVTTLKRRAPEIPVIVYPTPVQGAGSELQIAQAIKTASQRAECDVLIVCRGGGSIEDLWAFNEEPVVRAIESCTVPVVSGVGHETDFTLADFVADMRAPTPTGAAELVSPNRQESLHRLAQAQCRLKTVLEQRYFDASQKLDWLARQIRHPRQKLDEQRASIGKLAQTLSYSMTQNVRTHTARFERQTQALKHCRPDVSVCKKNIDRFQTALSHAFHQLLTHRRQSLTAQAALLEAVSPQHILERGFSVVKNTRGQVIRNADVLKQGQKLHIIFADGETDVRVSKEQGQQDLFDCI.

The protein belongs to the XseA family. In terms of assembly, heterooligomer composed of large and small subunits.

Its subcellular location is the cytoplasm. It carries out the reaction Exonucleolytic cleavage in either 5'- to 3'- or 3'- to 5'-direction to yield nucleoside 5'-phosphates.. In terms of biological role, bidirectionally degrades single-stranded DNA into large acid-insoluble oligonucleotides, which are then degraded further into small acid-soluble oligonucleotides. The polypeptide is Exodeoxyribonuclease 7 large subunit (Neisseria meningitidis serogroup B (strain ATCC BAA-335 / MC58)).